A 992-amino-acid chain; its full sequence is Vacuolar membrane protease (992 aa).

Over 1–24 the chain is Cytoplasmic; it reads MSPAMANPRVRKFNPIAFTPLPVT. Residues 25 to 45 form a helical membrane-spanning segment; the sequence is FITTIVYLAVLILVLVTYLVV. The Vacuolar portion of the chain corresponds to 46–390; that stretch reads PPAPTLEMSP…SAFAVFRLHT (345 aa). Asn59, Asn115, and Asn118 each carry an N-linked (GlcNAc...) asparagine glycan. Residues His174 and Asp186 each coordinate Zn(2+). Residue Glu220 is the Proton acceptor of the active site. Glu221 provides a ligand contact to Zn(2+). N-linked (GlcNAc...) asparagine glycosylation occurs at Asn237. The Zn(2+) site is built by Glu246 and His319. Residues 391 to 411 form a helical membrane-spanning segment; the sequence is LFALSVTLLVIGPLVLFITSI. The Cytoplasmic segment spans residues 412 to 446; that stretch reads ALSKTDRMYLFSMSKSLGGASETVSLRGLRGLFRT. Residues 447 to 467 traverse the membrane as a helical segment; it reads PIILTVTTVIPIGLAYLLEKI. At 468–474 the chain is on the vacuolar side; that stretch reads NPYIVHS. The chain crosses the membrane as a helical span at residues 475-495; sequence SQFAVWSMMLSVWIFVAWFLA. Residues 496–508 are Cytoplasmic-facing; it reads RVADFFRPSALHR. Residues 509–529 traverse the membrane as a helical segment; the sequence is AYSYTWIFIVTWIMLVISTVY. Over 530–533 the chain is Vacuolar; sequence ANQK. A helical membrane pass occupies residues 534–554; it reads GIAAGYFTFFYFAAVFLATWV. Topologically, residues 555–671 are cytoplasmic; that stretch reads SYLELFSLPR…WSWTLPRWTW (117 aa). Positions 579–620 are disordered; the sequence is RSSSLSSRLLTPSADELPSDIGPNGAENVGDPDETDPTESTS. Residues 672–692 form a helical membrane-spanning segment; sequence ILQLLLLAPIVIILVGQVGLL. The Vacuolar portion of the chain corresponds to 693 to 708; that stretch reads LTTAMSQIGSDGVSTF. Residues 709-729 form a helical membrane-spanning segment; it reads IVYLACALFSTLLFAPLLPFI. Topologically, residues 730 to 736 are cytoplasmic; it reads HRFTYHV. The helical transmembrane segment at 737 to 757 threads the bilayer; sequence PTFLLLIFIGTLIYNLVAFPF. Residues 758-992 are Vacuolar-facing; the sequence is SPANRLKIFF…VEASHDFIIQ (235 aa). Residues Asn805, Asn846, and Asn954 are each glycosylated (N-linked (GlcNAc...) asparagine).

Belongs to the peptidase M28 family. It depends on Zn(2+) as a cofactor.

The protein resides in the vacuole membrane. May be involved in vacuolar sorting and osmoregulation. The polypeptide is Vacuolar membrane protease (Paracoccidioides brasiliensis (strain Pb03)).